The chain runs to 466 residues: Ribulose bisphosphate carboxylase large chain (466 aa).

Lysine 5 is subject to N6,N6,N6-trimethyllysine. Substrate-binding residues include asparagine 114 and threonine 164. Residue lysine 166 is the Proton acceptor of the active site. Residue lysine 168 participates in substrate binding. 3 residues coordinate Mg(2+): lysine 192, aspartate 194, and glutamate 195. An N6-carboxylysine modification is found at lysine 192. The Proton acceptor role is filled by histidine 285. 3 residues coordinate substrate: arginine 286, histidine 318, and serine 370.

Belongs to the RuBisCO large chain family. Type I subfamily. Heterohexadecamer of 8 large chains and 8 small chains; disulfide-linked. The disulfide link is formed within the large subunit homodimers. Requires Mg(2+) as cofactor. Post-translationally, the disulfide bond which can form in the large chain dimeric partners within the hexadecamer appears to be associated with oxidative stress and protein turnover.

The protein resides in the plastid. It is found in the chloroplast. The catalysed reaction is 2 (2R)-3-phosphoglycerate + 2 H(+) = D-ribulose 1,5-bisphosphate + CO2 + H2O. The enzyme catalyses D-ribulose 1,5-bisphosphate + O2 = 2-phosphoglycolate + (2R)-3-phosphoglycerate + 2 H(+). Functionally, ruBisCO catalyzes two reactions: the carboxylation of D-ribulose 1,5-bisphosphate, the primary event in carbon dioxide fixation, as well as the oxidative fragmentation of the pentose substrate in the photorespiration process. Both reactions occur simultaneously and in competition at the same active site. The chain is Ribulose bisphosphate carboxylase large chain from Drosophyllum lusitanicum (Portuguese sundew).